We begin with the raw amino-acid sequence, 371 residues long: UDP-N-acetylglucosamine--N-acetylmuramyl-(pentapeptide) pyrophosphoryl-undecaprenol N-acetylglucosamine transferase (371 aa).

UDP-N-acetyl-alpha-D-glucosamine is bound by residues 15-17 (TGG), asparagine 126, arginine 172, serine 199, isoleucine 256, 275-280 (ALTVSE), and glutamine 301.

The protein belongs to the glycosyltransferase 28 family. MurG subfamily.

Its subcellular location is the cell inner membrane. It carries out the reaction di-trans,octa-cis-undecaprenyl diphospho-N-acetyl-alpha-D-muramoyl-L-alanyl-D-glutamyl-meso-2,6-diaminopimeloyl-D-alanyl-D-alanine + UDP-N-acetyl-alpha-D-glucosamine = di-trans,octa-cis-undecaprenyl diphospho-[N-acetyl-alpha-D-glucosaminyl-(1-&gt;4)]-N-acetyl-alpha-D-muramoyl-L-alanyl-D-glutamyl-meso-2,6-diaminopimeloyl-D-alanyl-D-alanine + UDP + H(+). It functions in the pathway cell wall biogenesis; peptidoglycan biosynthesis. Its function is as follows. Cell wall formation. Catalyzes the transfer of a GlcNAc subunit on undecaprenyl-pyrophosphoryl-MurNAc-pentapeptide (lipid intermediate I) to form undecaprenyl-pyrophosphoryl-MurNAc-(pentapeptide)GlcNAc (lipid intermediate II). This is UDP-N-acetylglucosamine--N-acetylmuramyl-(pentapeptide) pyrophosphoryl-undecaprenol N-acetylglucosamine transferase from Francisella tularensis subsp. tularensis (strain FSC 198).